We begin with the raw amino-acid sequence, 116 residues long: Ribosome-binding factor A (116 aa).

This sequence belongs to the RbfA family. Monomer. Binds 30S ribosomal subunits, but not 50S ribosomal subunits or 70S ribosomes.

It localises to the cytoplasm. One of several proteins that assist in the late maturation steps of the functional core of the 30S ribosomal subunit. Associates with free 30S ribosomal subunits (but not with 30S subunits that are part of 70S ribosomes or polysomes). Required for efficient processing of 16S rRNA. May interact with the 5'-terminal helix region of 16S rRNA. The chain is Ribosome-binding factor A from Pediococcus pentosaceus (strain ATCC 25745 / CCUG 21536 / LMG 10740 / 183-1w).